A 240-amino-acid polypeptide reads, in one-letter code: PF03932 family protein CutC (240 aa).

This sequence belongs to the CutC family.

The protein localises to the cytoplasm. In Xanthomonas campestris pv. campestris (strain B100), this protein is PF03932 family protein CutC.